Reading from the N-terminus, the 704-residue chain is DNA ligase (704 aa).

NAD(+) is bound by residues 58 to 62 (DYEYD), 107 to 108 (SL), and Glu-138. The active-site N6-AMP-lysine intermediate is the Lys-140. Positions 161, 199, 323, and 347 each coordinate NAD(+). Zn(2+)-binding residues include Cys-441, Cys-444, Cys-459, and Cys-464. The 84-residue stretch at 621 to 704 (EKKGKLAGLN…LKLIGGENTE (84 aa)) folds into the BRCT domain.

Belongs to the NAD-dependent DNA ligase family. LigA subfamily. Mg(2+) serves as cofactor. Requires Mn(2+) as cofactor.

It carries out the reaction NAD(+) + (deoxyribonucleotide)n-3'-hydroxyl + 5'-phospho-(deoxyribonucleotide)m = (deoxyribonucleotide)n+m + AMP + beta-nicotinamide D-nucleotide.. In terms of biological role, DNA ligase that catalyzes the formation of phosphodiester linkages between 5'-phosphoryl and 3'-hydroxyl groups in double-stranded DNA using NAD as a coenzyme and as the energy source for the reaction. It is essential for DNA replication and repair of damaged DNA. In Sulfurihydrogenibium sp. (strain YO3AOP1), this protein is DNA ligase.